The sequence spans 370 residues: MSKPEYFIGLMSGTSMDGVDAVLVDFSAEHPVLIASHTEAIPAHLLKGLQRLCQPETDEINRLGRLDRSVGKLFAQAVNHLLAKTTVTAAEVIAIGSHGQTVRHMPNLEMGFTLQIGDPNTIAIETNIDVIADFRRKDIALGGQGAPLVPAFHQQVFAQPGHSRVILNIGGIANITYLPGNSEQVLGFDTGPGNNLIDAFIQQNLNQPFDEDGAWADSGTTHPDLLKQLLSHSYFSLAYPKSTGRELFNRAWLEQQLADYSHLDQQDIQSTLLDLTCHSIANDINKLSPNGELFVCGGGALNKALMQRLATLVPGYKVDTTSALGVDAKWVEGIAFAWLAMRYHHDLPANLPAVTGASRTAILGGRFKAR.

13-20 (GTSMDGVD) provides a ligand contact to ATP.

The protein belongs to the anhydro-N-acetylmuramic acid kinase family.

The enzyme catalyses 1,6-anhydro-N-acetyl-beta-muramate + ATP + H2O = N-acetyl-D-muramate 6-phosphate + ADP + H(+). The protein operates within amino-sugar metabolism; 1,6-anhydro-N-acetylmuramate degradation. It participates in cell wall biogenesis; peptidoglycan recycling. In terms of biological role, catalyzes the specific phosphorylation of 1,6-anhydro-N-acetylmuramic acid (anhMurNAc) with the simultaneous cleavage of the 1,6-anhydro ring, generating MurNAc-6-P. Is required for the utilization of anhMurNAc either imported from the medium or derived from its own cell wall murein, and thus plays a role in cell wall recycling. The sequence is that of Anhydro-N-acetylmuramic acid kinase from Shewanella frigidimarina (strain NCIMB 400).